The following is a 389-amino-acid chain: Major outer membrane porin (389 aa).

The signal sequence occupies residues 1 to 23; the sequence is MKKLLKSALLSAAFAGSVGSLQA.

The protein belongs to the chlamydial porin (CP) (TC 1.B.2) family. As to quaternary structure, part of a disulfide cross-linked outer membrane complex (COMC) composed of the major outer membrane porin (MOMP), the small cysteine-rich protein (OmcA) and the large cysteine-rich periplasmic protein (OmcB).

The protein localises to the cell outer membrane. Its function is as follows. In elementary bodies (EBs, the infectious stage, which is able to survive outside the host cell) provides the structural integrity of the outer envelope through disulfide cross-links with the small cysteine-rich protein and the large cysteine-rich periplasmic protein. It has been described in publications as the Sarkosyl-insoluble COMC (Chlamydia outer membrane complex), and serves as the functional equivalent of peptidoglycan. Permits diffusion of specific solutes through the outer membrane. This is Major outer membrane porin (ompA) from Chlamydia pneumoniae (Chlamydophila pneumoniae).